The chain runs to 122 residues: Phospholipase A2 nigroviriditoxin basic subunit B (122 aa).

7 disulfides stabilise this stretch: Cys26/Cys115, Cys28/Cys44, Cys43/Cys95, Cys49/Cys122, Cys50/Cys88, Cys57/Cys81, and Cys75/Cys86. Ca(2+)-binding residues include Tyr27, Gly29, and Gly31. His47 is an active-site residue. Asp48 provides a ligand contact to Ca(2+). The active site involves Asp89.

This sequence belongs to the phospholipase A2 family. Group II subfamily. D49 sub-subfamily. Nigroviriditoxin is a heterodimer of an acidic subunit A and a basic subunit B. Ca(2+) serves as cofactor. In terms of tissue distribution, expressed by the venom gland.

The protein resides in the secreted. The enzyme catalyses a 1,2-diacyl-sn-glycero-3-phosphocholine + H2O = a 1-acyl-sn-glycero-3-phosphocholine + a fatty acid + H(+). Its function is as follows. Heterodimer A-B: Nigroviriditoxin possesses phospholipase A2 (PLA2) activity. It consists of a non-covalent association of a basic PLA2 subunit B with a non-enzymatic subunit A. In terms of biological role, subunit B: Snake venom phospholipase A2 (PLA2) that induces myonecrosis in mice. PLA2 catalyzes the calcium-dependent hydrolysis of the 2-acyl groups in 3-sn-phosphoglycerides. In Bothriechis nigroviridis (Black-speckled palm pit viper), this protein is Phospholipase A2 nigroviriditoxin basic subunit B.